The primary structure comprises 318 residues: NADH-ubiquinone oxidoreductase chain 1 (318 aa).

The next 8 helical transmembrane spans lie at 2 to 22, 76 to 96, 102 to 122, 146 to 166, 171 to 191, 217 to 237, 253 to 273, and 294 to 314; these read FMIN…FLTL, TLAL…YPLI, LLFI…SGWA, LAII…STLI, YLWL…STLA, AGPF…MNAL, ETYT…FLWV, and LPLT…ASCI.

The protein belongs to the complex I subunit 1 family. As to quaternary structure, core subunit of respiratory chain NADH dehydrogenase (Complex I) which is composed of 45 different subunits.

It is found in the mitochondrion inner membrane. It catalyses the reaction a ubiquinone + NADH + 5 H(+)(in) = a ubiquinol + NAD(+) + 4 H(+)(out). Functionally, core subunit of the mitochondrial membrane respiratory chain NADH dehydrogenase (Complex I) which catalyzes electron transfer from NADH through the respiratory chain, using ubiquinone as an electron acceptor. Essential for the catalytic activity and assembly of complex I. This is NADH-ubiquinone oxidoreductase chain 1 (MT-ND1) from Lemur catta (Ring-tailed lemur).